Consider the following 1075-residue polypeptide: Carbamoyl phosphate synthase large chain (1075 aa).

The carboxyphosphate synthetic domain stretch occupies residues 2 to 403; the sequence is PKRTDIKSIL…SLQKALRGLE (402 aa). ATP-binding residues include Arg129, Arg169, Gly175, Gly176, Glu208, Leu210, Glu215, Gly241, Ile242, His243, Gln285, and Glu299. Positions 133-328 constitute an ATP-grasp 1 domain; the sequence is DIAMKKIGLD…IAKVAAKLAV (196 aa). Mg(2+) is bound by residues Gln285, Glu299, and Asn301. Residues Gln285, Glu299, and Asn301 each coordinate Mn(2+). The tract at residues 404-553 is oligomerization domain; it reads VGATGFDPKV…YSTYEDECEA (150 aa). The carbamoyl phosphate synthetic domain stretch occupies residues 554–936; the sequence is NPSIDRDKIM…AFAKAQLGSN (383 aa). The region spanning 679 to 870 is the ATP-grasp 2 domain; that stretch reads QHAVDRLKLK…LAKVAARVMA (192 aa). Arg715, Arg754, Leu756, Glu761, Gly786, Val787, His788, Ser789, Gln829, and Glu841 together coordinate ATP. Mg(2+)-binding residues include Gln829, Glu841, and Asn843. Mn(2+) is bound by residues Gln829, Glu841, and Asn843. Positions 937–1075 constitute an MGS-like domain; the sequence is STMKKQGRAL…QEMHAQIKKS (139 aa). The interval 937-1075 is allosteric domain; that stretch reads STMKKQGRAL…QEMHAQIKKS (139 aa).

This sequence belongs to the CarB family. As to quaternary structure, composed of two chains; the small (or glutamine) chain promotes the hydrolysis of glutamine to ammonia, which is used by the large (or ammonia) chain to synthesize carbamoyl phosphate. Tetramer of heterodimers (alpha,beta)4. It depends on Mg(2+) as a cofactor. Mn(2+) is required as a cofactor.

The catalysed reaction is hydrogencarbonate + L-glutamine + 2 ATP + H2O = carbamoyl phosphate + L-glutamate + 2 ADP + phosphate + 2 H(+). It catalyses the reaction hydrogencarbonate + NH4(+) + 2 ATP = carbamoyl phosphate + 2 ADP + phosphate + 2 H(+). Its pathway is amino-acid biosynthesis; L-arginine biosynthesis; carbamoyl phosphate from bicarbonate: step 1/1. It functions in the pathway pyrimidine metabolism; UMP biosynthesis via de novo pathway; (S)-dihydroorotate from bicarbonate: step 1/3. In terms of biological role, large subunit of the glutamine-dependent carbamoyl phosphate synthetase (CPSase). CPSase catalyzes the formation of carbamoyl phosphate from the ammonia moiety of glutamine, carbonate, and phosphate donated by ATP, constituting the first step of 2 biosynthetic pathways, one leading to arginine and/or urea and the other to pyrimidine nucleotides. The large subunit (synthetase) binds the substrates ammonia (free or transferred from glutamine from the small subunit), hydrogencarbonate and ATP and carries out an ATP-coupled ligase reaction, activating hydrogencarbonate by forming carboxy phosphate which reacts with ammonia to form carbamoyl phosphate. In Salmonella typhimurium (strain LT2 / SGSC1412 / ATCC 700720), this protein is Carbamoyl phosphate synthase large chain.